The chain runs to 440 residues: Histidinol dehydrogenase homolog 2 (440 aa).

A Zn(2+)-binding site is contributed by histidine 265. Catalysis depends on proton acceptor residues glutamate 333 and histidine 334. Histidine 426 contributes to the Zn(2+) binding site.

Belongs to the histidinol dehydrogenase family. Zn(2+) serves as cofactor.

In Mesorhizobium japonicum (strain LMG 29417 / CECT 9101 / MAFF 303099) (Mesorhizobium loti (strain MAFF 303099)), this protein is Histidinol dehydrogenase homolog 2.